A 313-amino-acid polypeptide reads, in one-letter code: Interferon-inducible double-stranded RNA-dependent protein kinase activator A (313 aa).

A compositionally biased stretch (basic and acidic residues) spans 1-18 (MSQSRHRAEAPPLEREDS). The interval 1–21 (MSQSRHRAEAPPLEREDSGTF) is disordered. 3 sufficient for self-association and interaction with TARBP2 regions span residues 1 to 103 (MSQS…KANA), 102 to 195 (NASI…FSNI), and 195 to 313 (ISPE…AERK). Ser-18 bears the Phosphoserine mark. 3 consecutive DRBM domains span residues 34 to 101 (TPIQ…ILKA), 126 to 194 (NPIG…KFSN), and 240 to 308 (DYIQ…YLKI). Phosphoserine occurs at positions 167, 246, and 287.

This sequence belongs to the PRKRA family. As to quaternary structure, homodimer. Interacts with EIF2AK2/PKR through its DRBM domains. Interacts with DICER1, AGO2 and TARBP2. Also able to interact with dsRNA. Interacts with UBC9. Forms a complex with UBC9 and p53/TP53. Interacts with DUS2L (via DRBM domain). Interacts with RIGI. In terms of assembly, (Microbial infection) Interacts with ebolavirus protein VP35; this interaction inhibits the interaction between RIGI and PRKRA. In addition, this interaction disrupts the interaction between VP35 and the viral polymerase L. So the VP35-PRKRA interaction plays a critical role in determining the outcome of ebolavirus infection. The interaction PRKRA-VP35 also prevents PRKRA binding to DICER1 and thus allows the virus to counteract host RNA silencing. (Microbial infection) Interacts with human herpesvirus 8 protein MTA/ORF57; this interaction inhibits stress granule formation. Phosphorylated at Ser-246 in unstressed cells and at Ser-287 in stressed cells. Phosphorylation at Ser-246 appears to be a prerequisite for subsequent phosphorylation at Ser-287. Phosphorylation at Ser-246 and Ser-287 are necessary for activation of EIF2AK2/PKR under conditions of stress.

It localises to the cytoplasm. It is found in the perinuclear region. Functionally, activates EIF2AK2/PKR in the absence of double-stranded RNA (dsRNA), leading to phosphorylation of EIF2S1/EFI2-alpha and inhibition of translation and induction of apoptosis. Required for siRNA production by DICER1 and for subsequent siRNA-mediated post-transcriptional gene silencing. Does not seem to be required for processing of pre-miRNA to miRNA by DICER1. Promotes UBC9-p53/TP53 association and sumoylation and phosphorylation of p53/TP53 at 'Lys-386' at 'Ser-392' respectively and enhances its activity in a EIF2AK2/PKR-dependent manner. This chain is Interferon-inducible double-stranded RNA-dependent protein kinase activator A (PRKRA), found in Homo sapiens (Human).